Consider the following 284-residue polypeptide: MAQIIDGRGLAEKLQKKLAEKTARLKEKTGQVPGLVVIVVGNNPASQIYVRNKERSALAAGFRSKVERLPEETSQEELLSLIETYNQNPDWHGILVQLPLPEHIDDEAVLLAIDPDKDVDGFHPLNMGKLWSGHPVMIPATPAGIMAMFHEYGIELEGKRAVVIGRSNIVGKPMAQLLLAKNATVTLTHSRTHNLAKTAKRADILVVAIGRGHFVTKNFVKEGAVVIDVGMNRDENGKLIGDVKFDEVAEIASLITPVPGGVGPMTITMLMEQTYQAFKRSLES.

Residues 165–167 (GRS) and Ser-190 contribute to the NADP(+) site.

Belongs to the tetrahydrofolate dehydrogenase/cyclohydrolase family. Homodimer.

It carries out the reaction (6R)-5,10-methylene-5,6,7,8-tetrahydrofolate + NADP(+) = (6R)-5,10-methenyltetrahydrofolate + NADPH. The catalysed reaction is (6R)-5,10-methenyltetrahydrofolate + H2O = (6R)-10-formyltetrahydrofolate + H(+). It functions in the pathway one-carbon metabolism; tetrahydrofolate interconversion. Its function is as follows. Catalyzes the oxidation of 5,10-methylenetetrahydrofolate to 5,10-methenyltetrahydrofolate and then the hydrolysis of 5,10-methenyltetrahydrofolate to 10-formyltetrahydrofolate. The polypeptide is Bifunctional protein FolD (Streptococcus sanguinis (strain SK36)).